We begin with the raw amino-acid sequence, 754 residues long: Elongation factor G-1, mitochondrial (754 aa).

A mitochondrion-targeting transit peptide spans 1–17 (MARFPTSPAPNRLLRLF). The tr-type G domain maps to 63–340 (DKLRNIGISA…GVVSFLPSPN (278 aa)). Residues 72–79 (AHIDSGKT), 139–143 (DTPGH), and 193–196 (NKLD) each bind GTP.

It belongs to the TRAFAC class translation factor GTPase superfamily. Classic translation factor GTPase family. EF-G/EF-2 subfamily. As to expression, expressed in cotyledons and adult leaves at the same levels.

The protein localises to the mitochondrion. It functions in the pathway protein biosynthesis; polypeptide chain elongation. Mitochondrial GTPase that catalyzes the GTP-dependent ribosomal translocation step during translation elongation. During this step, the ribosome changes from the pre-translocational (PRE) to the post-translocational (POST) state as the newly formed A-site-bound peptidyl-tRNA and P-site-bound deacylated tRNA move to the P and E sites, respectively. Catalyzes the coordinated movement of the two tRNA molecules, the mRNA and conformational changes in the ribosome. The polypeptide is Elongation factor G-1, mitochondrial (MEFG1) (Arabidopsis thaliana (Mouse-ear cress)).